A 206-amino-acid polypeptide reads, in one-letter code: Outer-membrane lipoprotein carrier protein (206 aa).

A signal peptide spans 1 to 21; it reads MTRLLFVLVLSVCLLPVPVKA.

This sequence belongs to the LolA family. Monomer.

It localises to the periplasm. In terms of biological role, participates in the translocation of lipoproteins from the inner membrane to the outer membrane. Only forms a complex with a lipoprotein if the residue after the N-terminal Cys is not an aspartate (The Asp acts as a targeting signal to indicate that the lipoprotein should stay in the inner membrane). The sequence is that of Outer-membrane lipoprotein carrier protein from Nitrosomonas europaea (strain ATCC 19718 / CIP 103999 / KCTC 2705 / NBRC 14298).